The chain runs to 582 residues: Zinc finger protein somi-1 (582 aa).

2 disordered regions span residues Leu-179–Asp-251 and Ser-352–Gln-377. A compositionally biased stretch (polar residues) spans Thr-188–Asn-226. The segment covering Ser-227–Gly-244 has biased composition (low complexity). Over residues Ser-352–Ser-368 the composition is skewed to basic and acidic residues. A C2H2-type; Degenerate zinc finger spans residues Tyr-454 to His-477. Positions Ala-513–Leu-582 are disordered. Low complexity predominate over residues Leu-551–Asn-570. Residues Gln-572 to Leu-582 are compositionally biased toward pro residues.

As to quaternary structure, may interact with swsn-9; the interaction promotes hypodermal differentiation. As to expression, expressed in hypodermal seam cells, the somatic gonad and vulval precursor cells, body wall muscle and head neurons.

The protein resides in the nucleus. Its function is as follows. DNA-binding protein which binds to the promoters of let-60, lin-14 and lin-28, possibly to regulate genes involved in hypodermal and vulval development. Together with miRNAs mir-84 and let-7 may direct terminal differentiation of the seam cells, exit from the molting cycle, and vulva formation. Does not regulate the expression of mir-84. May promote hypodermal differentiation in association with swsn-9, a component of SWI/SNF chromatin remodeling complexes. This chain is Zinc finger protein somi-1, found in Caenorhabditis elegans.